The sequence spans 334 residues: Probable aminoacyl tRNA synthase complex-interacting multifunctional protein 2 (334 aa).

Residues 280 to 327 form the GST C-terminal domain; the sequence is LDKRLQKQQYFGGSQMSVADVGVYSSLIRMPAVTEKDLTPALVAWRKR.

Component of the aminoacyl-tRNA synthase complex which is comprised of a bifunctional glutamyl-prolyl-tRNA synthase, the monospecific isoleucyl, leucyl, glutaminyl, methionyl, lysyl, arginyl and aspartyl-tRNA synthases, and three auxiliary proteins.

It localises to the cytoplasm. The protein resides in the cytosol. It is found in the nucleus. Required for assembly and stability of the aminoacyl-tRNA synthase complex. This Drosophila melanogaster (Fruit fly) protein is Probable aminoacyl tRNA synthase complex-interacting multifunctional protein 2.